Consider the following 358-residue polypeptide: Sulfoquinovosyl glycerol transport ATP-binding protein SmoE (358 aa).

In terms of domain architecture, ABC transporter spans 4–234; that stretch reads VSLRKLDKSY…PESVFVGGFV (231 aa). ATP is bound at residue 36 to 43; the sequence is GPSGCGKS.

Belongs to the ABC transporter superfamily. As to quaternary structure, the complex is probably composed of two ATP-binding proteins (SmoE), two transmembrane proteins (SmoG and SmoH) and a solute-binding protein (SmoF).

Its subcellular location is the cell inner membrane. Functionally, part of the ABC transporter complex SmoEFGH involved in sulfoquinovosyl glycerol (SQGro) uptake. Responsible for energy coupling to the transport system. This Agrobacterium fabrum (strain C58 / ATCC 33970) (Agrobacterium tumefaciens (strain C58)) protein is Sulfoquinovosyl glycerol transport ATP-binding protein SmoE.